The sequence spans 102 residues: Large ribosomal subunit protein bL21 (102 aa).

This sequence belongs to the bacterial ribosomal protein bL21 family. As to quaternary structure, part of the 50S ribosomal subunit. Contacts protein L20.

This protein binds to 23S rRNA in the presence of protein L20. The chain is Large ribosomal subunit protein bL21 from Myxococcus xanthus (strain DK1622).